The chain runs to 229 residues: Interleukin-22 receptor subunit alpha-2 (229 aa).

The N-terminal stretch at 1-19 (MPKHCFLGLLIMLLTTATE) is a signal peptide. Fibronectin type-III domains are found at residues 28-127 (KPQK…TKLD) and 128-229 (PPVV…VQIP). Asn54 is a glycosylation site (N-linked (GlcNAc...) asparagine). 2 disulfides stabilise this stretch: Cys76-Cys84 and Cys204-Cys225.

The protein belongs to the type II cytokine receptor family.

Its subcellular location is the secreted. Functionally, receptor for IL22. Binds to IL22, prevents interaction with the functional IL-22R complex and blocks the activity of IL22 (in vitro). May play an important role as an IL22 antagonist in the regulation of inflammatory responses. In Rattus norvegicus (Rat), this protein is Interleukin-22 receptor subunit alpha-2 (Il22ra2).